The following is a 258-amino-acid chain: UPF0246 protein CGSHiGG_08495 (258 aa).

It belongs to the UPF0246 family.

The sequence is that of UPF0246 protein CGSHiGG_08495 from Haemophilus influenzae (strain PittGG).